Consider the following 509-residue polypeptide: ATP synthase subunit alpha (509 aa).

Gly169–Thr176 is a binding site for ATP.

Belongs to the ATPase alpha/beta chains family. In terms of assembly, F-type ATPases have 2 components, CF(1) - the catalytic core - and CF(0) - the membrane proton channel. CF(1) has five subunits: alpha(3), beta(3), gamma(1), delta(1), epsilon(1). CF(0) has three main subunits: a(1), b(2) and c(9-12). The alpha and beta chains form an alternating ring which encloses part of the gamma chain. CF(1) is attached to CF(0) by a central stalk formed by the gamma and epsilon chains, while a peripheral stalk is formed by the delta and b chains.

The protein resides in the cell inner membrane. It catalyses the reaction ATP + H2O + 4 H(+)(in) = ADP + phosphate + 5 H(+)(out). Its function is as follows. Produces ATP from ADP in the presence of a proton gradient across the membrane. The alpha chain is a regulatory subunit. The polypeptide is ATP synthase subunit alpha (Rhizobium etli (strain CIAT 652)).